The chain runs to 504 residues: Cytochrome P450 2D10 (504 aa).

O-linked (GlcNAc) serine glycosylation is present at Ser382. Cys446 serves as a coordination point for heme.

Belongs to the cytochrome P450 family. Heme is required as a cofactor.

The protein resides in the endoplasmic reticulum membrane. It localises to the microsome membrane. The enzyme catalyses an organic molecule + reduced [NADPH--hemoprotein reductase] + O2 = an alcohol + oxidized [NADPH--hemoprotein reductase] + H2O + H(+). In terms of biological role, cytochromes P450 are a group of heme-thiolate monooxygenases. In liver microsomes, this enzyme is involved in an NADPH-dependent electron transport pathway. It oxidizes a variety of structurally unrelated compounds, including steroids, fatty acids, and xenobiotics. In Rattus norvegicus (Rat), this protein is Cytochrome P450 2D10 (Cyp2d10).